A 379-amino-acid polypeptide reads, in one-letter code: Flap endonuclease 1 (379 aa).

Positions 1 to 105 (MGIKGLTKLL…QELAKRYSKR (105 aa)) are N-domain. D34 contributes to the Mg(2+) binding site. R71 is a DNA binding site. Mg(2+)-binding residues include D87, E159, E161, D180, and D182. The I-domain stretch occupies residues 123-254 (AIEKLSKRTV…QTALKLIRQH (132 aa)). E159 contacts DNA. Positions 232 and 234 each coordinate DNA. D234 is a binding site for Mg(2+). The segment at 331–379 (AKNKSSQGRLESFFKPTATTSAPLKRKETSDKTSKAAANKKTKAGGKKK) is disordered. The interval 336 to 344 (SQGRLESFF) is interaction with PCNA. A compositionally biased stretch (basic and acidic residues) spans 355–364 (KRKETSDKTS). Positions 368–379 (ANKKTKAGGKKK) are enriched in basic residues.

It belongs to the XPG/RAD2 endonuclease family. FEN1 subfamily. Interacts with PCNA. Three molecules of FEN1 bind to one PCNA trimer with each molecule binding to one PCNA monomer. PCNA stimulates the nuclease activity without altering cleavage specificity. It depends on Mg(2+) as a cofactor. Post-translationally, phosphorylated. Phosphorylation upon DNA damage induces relocalization to the nuclear plasma.

The protein localises to the nucleus. The protein resides in the nucleolus. It is found in the nucleoplasm. It localises to the mitochondrion. In terms of biological role, structure-specific nuclease with 5'-flap endonuclease and 5'-3' exonuclease activities involved in DNA replication and repair. During DNA replication, cleaves the 5'-overhanging flap structure that is generated by displacement synthesis when DNA polymerase encounters the 5'-end of a downstream Okazaki fragment. It enters the flap from the 5'-end and then tracks to cleave the flap base, leaving a nick for ligation. Also involved in the long patch base excision repair (LP-BER) pathway, by cleaving within the apurinic/apyrimidinic (AP) site-terminated flap. Acts as a genome stabilization factor that prevents flaps from equilibrating into structures that lead to duplications and deletions. Also possesses 5'-3' exonuclease activity on nicked or gapped double-stranded DNA, and exhibits RNase H activity. Also involved in replication and repair of rDNA and in repairing mitochondrial DNA. This is Flap endonuclease 1 from Zea mays (Maize).